Reading from the N-terminus, the 216-residue chain is Pyrrolidone-carboxylate peptidase (216 aa).

Residues glutamate 80, cysteine 143, and histidine 168 contribute to the active site.

This sequence belongs to the peptidase C15 family. Homotetramer.

The protein resides in the cytoplasm. It carries out the reaction Release of an N-terminal pyroglutamyl group from a polypeptide, the second amino acid generally not being Pro.. In terms of biological role, removes 5-oxoproline from various penultimate amino acid residues except L-proline. In Cupriavidus necator (strain ATCC 17699 / DSM 428 / KCTC 22496 / NCIMB 10442 / H16 / Stanier 337) (Ralstonia eutropha), this protein is Pyrrolidone-carboxylate peptidase.